Reading from the N-terminus, the 199-residue chain is Proteasome subunit beta type-2 (199 aa).

The protein belongs to the peptidase T1B family. In terms of assembly, the 26S proteasome consists of a 20S proteasome core and two 19S regulatory subunits. The 20S proteasome core is composed of 28 subunits that are arranged in four stacked rings, resulting in a barrel-shaped structure. The two end rings are each formed by seven alpha subunits, and the two central rings are each formed by seven beta subunits. The catalytic chamber with the active sites is on the inside of the barrel.

It localises to the cytoplasm. Its subcellular location is the nucleus. In terms of biological role, non-catalytic component of the proteasome, a multicatalytic proteinase complex which is characterized by its ability to cleave peptides with Arg, Phe, Tyr, Leu, and Glu adjacent to the leaving group at neutral or slightly basic pH. The proteasome has an ATP-dependent proteolytic activity. The chain is Proteasome subunit beta type-2 (pbs-4) from Caenorhabditis elegans.